The primary structure comprises 265 residues: Thiazole synthase (265 aa).

The Schiff-base intermediate with DXP role is filled by Lys103. Residues Gly164, 190 to 191 (AG), and 212 to 213 (NT) each bind 1-deoxy-D-xylulose 5-phosphate.

Belongs to the ThiG family. Homotetramer. Forms heterodimers with either ThiH or ThiS.

Its subcellular location is the cytoplasm. It catalyses the reaction [ThiS sulfur-carrier protein]-C-terminal-Gly-aminoethanethioate + 2-iminoacetate + 1-deoxy-D-xylulose 5-phosphate = [ThiS sulfur-carrier protein]-C-terminal Gly-Gly + 2-[(2R,5Z)-2-carboxy-4-methylthiazol-5(2H)-ylidene]ethyl phosphate + 2 H2O + H(+). The protein operates within cofactor biosynthesis; thiamine diphosphate biosynthesis. Its function is as follows. Catalyzes the rearrangement of 1-deoxy-D-xylulose 5-phosphate (DXP) to produce the thiazole phosphate moiety of thiamine. Sulfur is provided by the thiocarboxylate moiety of the carrier protein ThiS. In vitro, sulfur can be provided by H(2)S. The sequence is that of Thiazole synthase from Bordetella bronchiseptica (strain ATCC BAA-588 / NCTC 13252 / RB50) (Alcaligenes bronchisepticus).